The chain runs to 515 residues: Fatty acyl-CoA reductase 1 (515 aa).

Residues 1–465 lie on the Cytoplasmic side of the membrane; sequence MVSIPEYYEG…ARKHLNKLRN (465 aa). Residues 451–507 form a necessary and sufficient for PEX19-mediated localization into peroxisome membrane region; that stretch reads SGLPAARKHLNKLRNIRYGFNTILVILIWRIFIARSQMARNIWYFVVSLCYKFLSYF. Residues 466–483 traverse the membrane as a helical segment; that stretch reads IRYGFNTILVILIWRIFI. At 484-515 the chain is on the peroxisomal side; the sequence is ARSQMARNIWYFVVSLCYKFLSYFRASSTMRY.

This sequence belongs to the fatty acyl-CoA reductase family. Interacts with PEX19; PEX19 mediates the targeting of FAR1 to peroxisomes.

It is found in the peroxisome membrane. It carries out the reaction a long-chain fatty acyl-CoA + 2 NADPH + 2 H(+) = a long-chain primary fatty alcohol + 2 NADP(+) + CoA. The catalysed reaction is hexadecanoyl-CoA + 2 NADPH + 2 H(+) = hexadecan-1-ol + 2 NADP(+) + CoA. It catalyses the reaction octadecanoyl-CoA + 2 NADPH + 2 H(+) = octadecan-1-ol + 2 NADP(+) + CoA. The enzyme catalyses eicosanoyl-CoA + 2 NADPH + 2 H(+) = eicosan-1-ol + 2 NADP(+) + CoA. It carries out the reaction (9Z)-octadecenoyl-CoA + 2 NADPH + 2 H(+) = (9Z)-octadecen-1-ol + 2 NADP(+) + CoA. The catalysed reaction is (9Z,12Z)-octadecadienoyl-CoA + 2 NADPH + 2 H(+) = (9Z,12Z)-octadecadien-1-ol + 2 NADP(+) + CoA. It catalyses the reaction 16-methylheptadecanoyl-CoA + 2 NADPH + 2 H(+) = 16-methylheptadecan-1-ol + 2 NADP(+) + CoA. The enzyme catalyses 18-methylnonadecanoyl-CoA + 2 NADPH + 2 H(+) = 18-methylnonadecan-1-ol + 2 NADP(+) + CoA. In terms of biological role, catalyzes the reduction of saturated and unsaturated C16 or C18 fatty acyl-CoA to fatty alcohols. It plays an essential role in the production of ether lipids/plasmalogens which synthesis requires fatty alcohols. In parallel, it is also required for wax monoesters production since fatty alcohols also constitute a substrate for their synthesis. The chain is Fatty acyl-CoA reductase 1 from Homo sapiens (Human).